A 177-amino-acid polypeptide reads, in one-letter code: ATP synthase subunit delta (177 aa).

It belongs to the ATPase delta chain family. In terms of assembly, F-type ATPases have 2 components, F(1) - the catalytic core - and F(0) - the membrane proton channel. F(1) has five subunits: alpha(3), beta(3), gamma(1), delta(1), epsilon(1). F(0) has three main subunits: a(1), b(2) and c(10-14). The alpha and beta chains form an alternating ring which encloses part of the gamma chain. F(1) is attached to F(0) by a central stalk formed by the gamma and epsilon chains, while a peripheral stalk is formed by the delta and b chains.

It localises to the cell inner membrane. Functionally, f(1)F(0) ATP synthase produces ATP from ADP in the presence of a proton or sodium gradient. F-type ATPases consist of two structural domains, F(1) containing the extramembraneous catalytic core and F(0) containing the membrane proton channel, linked together by a central stalk and a peripheral stalk. During catalysis, ATP synthesis in the catalytic domain of F(1) is coupled via a rotary mechanism of the central stalk subunits to proton translocation. This protein is part of the stalk that links CF(0) to CF(1). It either transmits conformational changes from CF(0) to CF(1) or is implicated in proton conduction. The polypeptide is ATP synthase subunit delta (Shewanella oneidensis (strain ATCC 700550 / JCM 31522 / CIP 106686 / LMG 19005 / NCIMB 14063 / MR-1)).